A 650-amino-acid polypeptide reads, in one-letter code: Threonine--tRNA ligase (650 aa).

A TGS domain is found at 5-67; it reads NKSMFIKLKD…QEGDQVILWG (63 aa). Residues 246 to 537 are catalytic; sequence DHKLLGAKLD…LIEHYVGKFP (292 aa). Residues Cys337, His388, and His514 each coordinate Zn(2+).

Belongs to the class-II aminoacyl-tRNA synthetase family. Homodimer. It depends on Zn(2+) as a cofactor.

The protein localises to the cytoplasm. The enzyme catalyses tRNA(Thr) + L-threonine + ATP = L-threonyl-tRNA(Thr) + AMP + diphosphate + H(+). Functionally, catalyzes the attachment of threonine to tRNA(Thr) in a two-step reaction: L-threonine is first activated by ATP to form Thr-AMP and then transferred to the acceptor end of tRNA(Thr). Also edits incorrectly charged L-seryl-tRNA(Thr). The protein is Threonine--tRNA ligase of Protochlamydia amoebophila (strain UWE25).